The following is a 63-amino-acid chain: MNFYNIFVFVALILAITIGQSEAGWLKKIGKKIERVGQHTRDATIQGLGVAQQAANVAATARG.

Positions 1–23 are cleaved as a signal peptide; the sequence is MNFYNIFVFVALILAITIGQSEA. Residue arginine 62 is modified to Arginine amide.

This sequence belongs to the cecropin family.

It localises to the secreted. Its function is as follows. Cecropins have lytic and antibacterial activity against several Gram-positive and Gram-negative bacteria. The polypeptide is Cecropin-A1 (CecA1) (Drosophila sechellia (Fruit fly)).